A 209-amino-acid chain; its full sequence is Protein lin-28 homolog A (209 aa).

Residues 1–31 form a disordered region; the sequence is MGSVSNQQFAGGCAKAAEEAPEEAPEDAARA. Gly-2 carries the N-acetylglycine modification. Position 3 is a phosphoserine (Ser-3). One can recognise a CSD domain in the interval 39 to 112; it reads HGAGICKWFN…GLESIRVTGP (74 aa). Residues 113–136 are flexible linker; it reads GGVFCIGSERRPKGKSMQKRRSKG. Ser-120 carries the phosphoserine modification. 2 consecutive CCHC-type zinc fingers follow at residues 137–154 and 159–176; these read DRCY…ECKL and KKCH…SCPL. A disordered region spans residues 178–209; the sequence is AQQGPSAQGKPTYFREEEEEIHSPTLLPEAQN. Ser-200 carries the phosphoserine modification.

The protein belongs to the lin-28 family. Monomer. During skeletal muscle differentiation, associated with translation initiation complexes in the polysomal compartment. Directly interacts with EIF3S2. Interacts with NCL in an RNA-dependent manner. Interacts (via C-terminus) with DHX9 (via N- and C-terminus); this interaction occurs in a RNA-independent manner. Interacts with TUT4 in the presence of pre-let-7 RNA. As to expression, expressed in embryonic stem cells, placenta and testis. Tends to be up-regulated in HER2-overexpressing breast tumors.

It localises to the cytoplasm. Its subcellular location is the rough endoplasmic reticulum. The protein localises to the P-body. The protein resides in the stress granule. It is found in the nucleus. It localises to the nucleolus. In terms of biological role, RNA-binding protein that inhibits processing of pre-let-7 miRNAs and regulates translation of mRNAs that control developmental timing, pluripotency and metabolism. Seems to recognize a common structural G-quartet (G4) feature in its miRNA and mRNA targets. 'Translational enhancer' that drives specific mRNAs to polysomes and increases the efficiency of protein synthesis. Its association with the translational machinery and target mRNAs results in an increased number of initiation events per molecule of mRNA and, indirectly, in mRNA stabilization. Binds IGF2 mRNA, MYOD1 mRNA, ARBP/36B4 ribosomal protein mRNA and its own mRNA. Essential for skeletal muscle differentiation program through the translational up-regulation of IGF2 expression. Suppressor of microRNA (miRNA) biogenesis, including that of let-7, miR107, miR-143 and miR-200c. Specifically binds the miRNA precursors (pre-miRNAs), recognizing an 5'-GGAG-3' motif found in pre-miRNA terminal loop, and recruits TUT4 and TUT7 uridylyltransferases. This results in the terminal uridylation of target pre-miRNAs. Uridylated pre-miRNAs fail to be processed by Dicer and undergo degradation. The repression of let-7 expression is required for normal development and contributes to maintain the pluripotent state by preventing let-7-mediated differentiation of embryonic stem cells. Localized to the periendoplasmic reticulum area, binds to a large number of spliced mRNAs and inhibits the translation of mRNAs destined for the ER, reducing the synthesis of transmembrane proteins, ER or Golgi lumen proteins, and secretory proteins. Binds to and enhances the translation of mRNAs for several metabolic enzymes, such as PFKP, PDHA1 or SDHA, increasing glycolysis and oxidative phosphorylation. Which, with the let-7 repression may enhance tissue repair in adult tissue. The chain is Protein lin-28 homolog A (LIN28A) from Homo sapiens (Human).